The chain runs to 622 residues: Polypeptide N-acetylgalactosaminyltransferase 6 (622 aa).

Residues 1-8 lie on the Cytoplasmic side of the membrane; sequence MRLLRRRH. A helical; Signal-anchor for type II membrane protein membrane pass occupies residues 9-28; that stretch reads MSLRLAMLGSVFMLFLFIRQ. The Lumenal portion of the chain corresponds to 29 to 622; it reads KDVSNQEQAM…RDPYQLWLFV (594 aa). N-linked (GlcNAc...) asparagine glycosylation is present at Asn-86. The tract at residues 176 to 285 is catalytic subdomain A; sequence LPTTSVIIVF…HGWLEPLLAR (110 aa). The Mn(2+) site is built by Asp-269, His-271, and His-407. The catalytic subdomain B stretch occupies residues 348-410; sequence PIKSPTFAGG…PCSVVGHVFR (63 aa). Residue Asn-476 is glycosylated (N-linked (GlcNAc...) asparagine). Residues 506 to 622 enclose the Ricin B-type lectin domain; the sequence is TNQCLDVGEN…RDPYQLWLFV (117 aa). A disulfide bridge links Cys-509 with Cys-527. UDP-N-acetyl-alpha-D-galactosamine-binding residues include Asp-511, Glu-514, His-528, and Asn-533. 2 disulfides stabilise this stretch: Cys-553/Cys-566 and Cys-597/Cys-610.

Belongs to the glycosyltransferase 2 family. GalNAc-T subfamily. It depends on Mn(2+) as a cofactor.

It is found in the golgi apparatus membrane. It carries out the reaction L-seryl-[protein] + UDP-N-acetyl-alpha-D-galactosamine = a 3-O-[N-acetyl-alpha-D-galactosaminyl]-L-seryl-[protein] + UDP + H(+). The catalysed reaction is L-threonyl-[protein] + UDP-N-acetyl-alpha-D-galactosamine = a 3-O-[N-acetyl-alpha-D-galactosaminyl]-L-threonyl-[protein] + UDP + H(+). The protein operates within protein modification; protein glycosylation. In terms of biological role, catalyzes the initial reaction in O-linked oligosaccharide biosynthesis, the transfer of an N-acetyl-D-galactosamine residue to a serine or threonine residue on the protein receptor. May participate in synthesis of oncofetal fibronectin. Has activity toward Muc1a, Muc2, EA2 and fibronectin peptides. The polypeptide is Polypeptide N-acetylgalactosaminyltransferase 6 (Galnt6) (Mus musculus (Mouse)).